Here is a 294-residue protein sequence, read N- to C-terminus: Protoheme IX farnesyltransferase (294 aa).

9 helical membrane-spanning segments follow: residues V22–P42, I46–C66, I89–L109, L116–L136, N143–A163, A170–L190, F212–F232, V234–W254, and F272–L292.

Belongs to the UbiA prenyltransferase family. Protoheme IX farnesyltransferase subfamily.

It is found in the cell inner membrane. The enzyme catalyses heme b + (2E,6E)-farnesyl diphosphate + H2O = Fe(II)-heme o + diphosphate. It participates in porphyrin-containing compound metabolism; heme O biosynthesis; heme O from protoheme: step 1/1. Functionally, converts heme B (protoheme IX) to heme O by substitution of the vinyl group on carbon 2 of heme B porphyrin ring with a hydroxyethyl farnesyl side group. The protein is Protoheme IX farnesyltransferase of Janthinobacterium sp. (strain Marseille) (Minibacterium massiliensis).